The chain runs to 1103 residues: Coatomer subunit beta (1103 aa).

HEAT repeat units follow at residues 51-89, 94-129, 130-166, 247-284, 322-359, 365-404, and 405-441; these read EAYT…CRPD, EEMI…RQFK, VLEP…NFGL, QQKA…APVS, RTME…KNSV, VLKR…RFPE, and AAAS…TCVH.

In terms of assembly, oligomeric complex that consists of at least the alpha, beta, beta', gamma, delta, epsilon and zeta subunits.

The protein resides in the cytoplasm. Its subcellular location is the golgi apparatus membrane. The protein localises to the cytoplasmic vesicle. It localises to the COPI-coated vesicle membrane. Functionally, the coatomer is a cytosolic protein complex that binds to dilysine motifs and reversibly associates with Golgi non-clathrin-coated vesicles, which further mediate biosynthetic protein transport from the ER, via the Golgi up to the trans Golgi network. Coatomer complex is required for budding from Golgi membranes, and is essential for the retrograde Golgi-to-ER transport of dilysine-tagged proteins. The sequence is that of Coatomer subunit beta from Toxoplasma gondii.